A 70-amino-acid polypeptide reads, in one-letter code: Small ribosomal subunit protein bS21 (70 aa).

Residues 40-70 (KPTAERKRKHAAAVKRHYKRIRSQQLPPRLY) form a disordered region. Residues 45–61 (RKRKHAAAVKRHYKRIR) show a composition bias toward basic residues.

The protein belongs to the bacterial ribosomal protein bS21 family.

In Bordetella parapertussis (strain 12822 / ATCC BAA-587 / NCTC 13253), this protein is Small ribosomal subunit protein bS21.